We begin with the raw amino-acid sequence, 239 residues long: Demethylmenaquinone methyltransferase (239 aa).

S-adenosyl-L-methionine-binding positions include Thr68, Asp86, and 111-112 (NG).

It belongs to the class I-like SAM-binding methyltransferase superfamily. MenG/UbiE family.

It catalyses the reaction a 2-demethylmenaquinol + S-adenosyl-L-methionine = a menaquinol + S-adenosyl-L-homocysteine + H(+). Its pathway is quinol/quinone metabolism; menaquinone biosynthesis; menaquinol from 1,4-dihydroxy-2-naphthoate: step 2/2. Its function is as follows. Methyltransferase required for the conversion of demethylmenaquinol (DMKH2) to menaquinol (MKH2). In Tropheryma whipplei (strain TW08/27) (Whipple's bacillus), this protein is Demethylmenaquinone methyltransferase.